The primary structure comprises 663 residues: Protein-arginine deiminase type-1 (663 aa).

Ca(2+)-binding residues include Asn153, Asp155, Asp157, Asp165, Asp176, Asp179, Gln351, Glu353, Lys364, Asp371, Ser372, Asn375, Phe409, and Leu412. Catalysis depends on Cys645, which acts as the Nucleophile.

The protein belongs to the protein arginine deiminase family. As to quaternary structure, monomer. Ca(2+) serves as cofactor. Detected in epidermal keratinocytes (at protein level). Epidermis, prostate, testis, placenta, spleen and thymus.

It is found in the cytoplasm. The enzyme catalyses L-arginyl-[protein] + H2O = L-citrullyl-[protein] + NH4(+). Functionally, catalyzes the deimination of arginine residues of proteins. The sequence is that of Protein-arginine deiminase type-1 (PADI1) from Homo sapiens (Human).